The following is a 1582-amino-acid chain: Mediator of RNA polymerase II transcription subunit 12 (1582 aa).

Disordered regions lie at residues 1–114, 146–189, and 1479–1512; these read MIPN…PSAL, PQGK…VQTT, and SQLS…SQAT. The span at 83 to 100 shows a compositional bias: polar residues; the sequence is AESSANPASPTPATTGDS. Low complexity predominate over residues 1479 to 1493; sequence SQLSASISSPAAGGS. The segment covering 1499-1512 has biased composition (polar residues); the sequence is PSGTLSGGHSSQAT.

The protein belongs to the Mediator complex subunit 12 family. Component of the srb8-11 complex, which itself associates with the Mediator complex.

It is found in the nucleus. Component of the srb8-11 complex. The srb8-11 complex is a regulatory module of the Mediator complex which is itself involved in regulation of basal and activated RNA polymerase II-dependent transcription. The srb8-11 complex may be involved in the transcriptional repression of a subset of genes regulated by Mediator. It may inhibit the association of the Mediator complex with RNA polymerase II to form the holoenzyme complex. The polypeptide is Mediator of RNA polymerase II transcription subunit 12 (srb8) (Emericella nidulans (strain FGSC A4 / ATCC 38163 / CBS 112.46 / NRRL 194 / M139) (Aspergillus nidulans)).